The sequence spans 98 residues: NADH-ubiquinone oxidoreductase chain 4L (98 aa).

The next 3 helical transmembrane spans lie at 1 to 21 (MSLIHMNIIMAFTLSLVGLLM), 29 to 49 (ALLCMEGMMLSLFILATLTAL), and 59 to 79 (MPIILLVFAACEAAIGLALLV).

It belongs to the complex I subunit 4L family. As to quaternary structure, core subunit of respiratory chain NADH dehydrogenase (Complex I) which is composed of 45 different subunits.

The protein resides in the mitochondrion inner membrane. It catalyses the reaction a ubiquinone + NADH + 5 H(+)(in) = a ubiquinol + NAD(+) + 4 H(+)(out). In terms of biological role, core subunit of the mitochondrial membrane respiratory chain NADH dehydrogenase (Complex I) which catalyzes electron transfer from NADH through the respiratory chain, using ubiquinone as an electron acceptor. Part of the enzyme membrane arm which is embedded in the lipid bilayer and involved in proton translocation. The polypeptide is NADH-ubiquinone oxidoreductase chain 4L (MT-ND4L) (Hyperoodon ampullatus (Northern bottlenose whale)).